The chain runs to 333 residues: Fructose-1,6-bisphosphatase class 1 (333 aa).

Mg(2+) is bound by residues Glu92, Asp113, Leu115, and Asp116. Substrate contacts are provided by residues 116 to 119, Asn209, Tyr242, and Lys272; that span reads DGSS. Glu278 provides a ligand contact to Mg(2+).

It belongs to the FBPase class 1 family. Homotetramer. Requires Mg(2+) as cofactor.

The protein localises to the cytoplasm. The catalysed reaction is beta-D-fructose 1,6-bisphosphate + H2O = beta-D-fructose 6-phosphate + phosphate. The protein operates within carbohydrate biosynthesis; Calvin cycle. The protein is Fructose-1,6-bisphosphatase class 1 of Chlorobium luteolum (strain DSM 273 / BCRC 81028 / 2530) (Pelodictyon luteolum).